The chain runs to 576 residues: Sulfite reductase [NADPH] hemoprotein beta-component (576 aa).

The span at 1–12 (MNVKTEPDRSRD) shows a compositional bias: basic and acidic residues. The segment at 1 to 25 (MNVKTEPDRSRDVSQPLDKLGPDET) is disordered. Residues cysteine 441, cysteine 447, cysteine 486, and cysteine 490 each coordinate [4Fe-4S] cluster. Cysteine 490 contributes to the siroheme binding site.

The protein belongs to the nitrite and sulfite reductase 4Fe-4S domain family. As to quaternary structure, alpha(8)-beta(8). The alpha component is a flavoprotein, the beta component is a hemoprotein. Siroheme serves as cofactor. The cofactor is [4Fe-4S] cluster.

The catalysed reaction is hydrogen sulfide + 3 NADP(+) + 3 H2O = sulfite + 3 NADPH + 4 H(+). It participates in sulfur metabolism; hydrogen sulfide biosynthesis; hydrogen sulfide from sulfite (NADPH route): step 1/1. Functionally, component of the sulfite reductase complex that catalyzes the 6-electron reduction of sulfite to sulfide. This is one of several activities required for the biosynthesis of L-cysteine from sulfate. The chain is Sulfite reductase [NADPH] hemoprotein beta-component from Nitrobacter hamburgensis (strain DSM 10229 / NCIMB 13809 / X14).